The sequence spans 216 residues: Serine acetyltransferase (216 aa).

Belongs to the transferase hexapeptide repeat family.

The protein resides in the cytoplasm. It catalyses the reaction L-serine + acetyl-CoA = O-acetyl-L-serine + CoA. It functions in the pathway amino-acid biosynthesis; L-cysteine biosynthesis; L-cysteine from L-serine: step 1/2. Inhibited by cysteine. Its function is as follows. Catalyzes the acetylation of serine by acetyl-CoA to produce O-acetylserine (OAS). The chain is Serine acetyltransferase from Bacillus licheniformis (strain ATCC 14580 / DSM 13 / JCM 2505 / CCUG 7422 / NBRC 12200 / NCIMB 9375 / NCTC 10341 / NRRL NRS-1264 / Gibson 46).